Here is a 183-residue protein sequence, read N- to C-terminus: Adenine phosphoribosyltransferase (183 aa).

This sequence belongs to the purine/pyrimidine phosphoribosyltransferase family. Homodimer.

It localises to the cytoplasm. It carries out the reaction AMP + diphosphate = 5-phospho-alpha-D-ribose 1-diphosphate + adenine. It functions in the pathway purine metabolism; AMP biosynthesis via salvage pathway; AMP from adenine: step 1/1. In terms of biological role, catalyzes a salvage reaction resulting in the formation of AMP, that is energically less costly than de novo synthesis. The sequence is that of Adenine phosphoribosyltransferase from Shewanella sp. (strain MR-7).